The primary structure comprises 274 residues: ATP synthase subunit a (274 aa).

A run of 5 helical transmembrane segments spans residues 43–63 (TLNI…LLVF), 103–123 (VIAP…MMDL), 149–169 (DVSI…FYSI), 223–243 (LIFI…LSVP), and 245–265 (AIFH…LTIV).

Belongs to the ATPase A chain family. As to quaternary structure, F-type ATPases have 2 components, CF(1) - the catalytic core - and CF(0) - the membrane proton channel. CF(1) has five subunits: alpha(3), beta(3), gamma(1), delta(1), epsilon(1). CF(0) has three main subunits: a(1), b(2) and c(9-12). The alpha and beta chains form an alternating ring which encloses part of the gamma chain. CF(1) is attached to CF(0) by a central stalk formed by the gamma and epsilon chains, while a peripheral stalk is formed by the delta and b chains.

Its subcellular location is the cell inner membrane. Key component of the proton channel; it plays a direct role in the translocation of protons across the membrane. The protein is ATP synthase subunit a of Yersinia pestis bv. Antiqua (strain Angola).